Reading from the N-terminus, the 231-residue chain is Casein kinase II subunit beta (231 aa).

The protein belongs to the casein kinase 2 subunit beta family. As to quaternary structure, tetramer composed of two alpha chains, one beta chain and one beta' chain. Post-translationally, phosphorylated by alpha subunit.

Regulatory subunit of casein kinase II/CK2. As part of the kinase complex regulates the basal catalytic activity of the alpha subunit a constitutively active serine/threonine-protein kinase that phosphorylates a large number of substrates containing acidic residues C-terminal to the phosphorylated serine or threonine. In Schizosaccharomyces pombe (strain 972 / ATCC 24843) (Fission yeast), this protein is Casein kinase II subunit beta.